The chain runs to 501 residues: Beta-glucosidase 25 (501 aa).

An N-terminal signal peptide occupies residues 1–19 (MSLLTLVHILVSFSACVEA). Position 39 (glutamine 39) interacts with a beta-D-glucoside. A glycan (N-linked (GlcNAc...) asparagine) is linked at asparagine 107. A beta-D-glucoside-binding positions include histidine 140 and 185 to 186 (NE). Glutamate 186 (proton donor) is an active-site residue. A disulfide bridge connects residues cysteine 205 and cysteine 213. Residues tyrosine 329, glutamate 402, tryptophan 452, 459–460 (EW), and phenylalanine 468 contribute to the a beta-D-glucoside site. Catalysis depends on glutamate 402, which acts as the Nucleophile. N-linked (GlcNAc...) asparagine glycosylation is present at asparagine 478.

This sequence belongs to the glycosyl hydrolase 1 family.

The catalysed reaction is Hydrolysis of terminal, non-reducing beta-D-glucosyl residues with release of beta-D-glucose.. The chain is Beta-glucosidase 25 (BGLU25) from Oryza sativa subsp. japonica (Rice).